Reading from the N-terminus, the 101-residue chain is Small ribosomal subunit protein uS14 (101 aa).

The segment covering 1–10 (MAKKSSIEKN) has biased composition (basic and acidic residues). The segment at 1-23 (MAKKSSIEKNNRRRRMNRNAAAK) is disordered. Over residues 11–23 (NRRRRMNRNAAAK) the composition is skewed to basic residues.

This sequence belongs to the universal ribosomal protein uS14 family. As to quaternary structure, part of the 30S ribosomal subunit. Contacts proteins S3 and S10.

In terms of biological role, binds 16S rRNA, required for the assembly of 30S particles and may also be responsible for determining the conformation of the 16S rRNA at the A site. The chain is Small ribosomal subunit protein uS14 from Nitrobacter winogradskyi (strain ATCC 25391 / DSM 10237 / CIP 104748 / NCIMB 11846 / Nb-255).